The sequence spans 201 residues: MKLIVSVFLIGCQFLNILGERQCITMIPKLCFNNNYSGNTTLDKWRTVMQFTYGDVEPNIIIPNGFVEGSNRCMNVEATTVCFSEPPLSNPELLSETWTMTDLYFKMPRSWWIFEIGKPRVCANVENMVCFAVSDDEGTHQWSFKVNMLYGNVVPKLGPPNKRVRNYCMKVDESKICFSEQPLLDDFSNKSWKLNKILFNV.

The signal sequence occupies residues 1-19; that stretch reads MKLIVSVFLIGCQFLNILG.

This is an uncharacterized protein from Acheta domesticus (House cricket).